The sequence spans 423 residues: Voltage-dependent calcium channel gamma-8 subunit (423 aa).

The next 4 membrane-spanning stretches (helical) occupy residues 19-39, 127-147, 157-177, and 207-227; these read VQVL…TIAI, SSIF…CVAA, IILG…IGVI, and FGGL…NIYI. Phosphoserine is present on residues Ser-251 and Ser-254. The tract at residues 271–304 is disordered; that stretch reads RRSRSSSRGSSEASPSRDASPGGPGGPGFASTDI. Low complexity predominate over residues 276 to 287; sequence SSRGSSEASPSR. The helical transmembrane segment at 318–338 threads the bilayer; it reads VAAGLASAGGGGSGAGVGAYG. Disordered stretches follow at residues 342-363 and 378-423; these read GAAG…GFLT and VTVT…TTPV. Residues 384-399 show a composition bias toward pro residues; the sequence is PAAPAPAPAPPAPAAP. Polar residues predominate over residues 410 to 423; the sequence is ASNTNTLNRKTTPV.

Belongs to the PMP-22/EMP/MP20 family. CACNG subfamily. Interacts with CACNA1C. Identified in a complex with the L-type calcium channel subunits CACNA1C, CACNA2D1 and either CACNB1 or CACNB2. Acts as an auxiliary subunit for AMPA-selective glutamate receptors (AMPARs). Found in a complex with GRIA1, GRIA2, GRIA3, GRIA4, CNIH2, CNIH3, CACNG2, CACNG3, CACNG4, CACNG5 and CACNG7. Interacts with CNIH2. Found in a complex with GRIA1, GRIA2, GRIA3, GRIA4, DLG4 and CNIH2. In terms of processing, palmitoylated. Probably palmitoylated by ZDHHC3 and ZDHHC7.

It localises to the cell membrane. The protein localises to the postsynaptic density membrane. Functionally, regulates the activity of L-type calcium channels that contain CACNA1C as pore-forming subunit. Regulates the trafficking and gating properties of AMPA-selective glutamate receptors (AMPARs). Promotes their targeting to the cell membrane and synapses and modulates their gating properties by slowing their rates of activation, deactivation and desensitization and by mediating their resensitization. Does not show subunit-specific AMPA receptor regulation and regulates all AMPAR subunits. Thought to stabilize the calcium channel in an inactivated (closed) state. The chain is Voltage-dependent calcium channel gamma-8 subunit from Mus musculus (Mouse).